Consider the following 437-residue polypeptide: MKHLYIKTFGCQMNSYDSTRMADLLGESHAFQSTDDPEKADLIILNTCHIREKAEDKLFSELGRLRPLAERGVILAVGGCVGQAEGRTIFSRAPYVRMVFGPQNYHKLPQMIQRALDGETRVIAEDIPSVDKFDNLPQVRAQGVVGQVTVQEGCDKFCAFCVVPYTRGREWSRPVAAILAETEALAQQGVREVLLLGQNVNAYAGVDEEGVSYDLALLIRRVALIEGIERIRFVTSHPVDMNEDLVEVFGEIEQLAPYLHLPIQSGSDAILAAMQRGHTVEEYCTWVEKVRAVCPDVALASDFIVGFPGETEQDFQATLDLISRLGFDHAYSFKYSSRPGTPAADMPEQVDEAEKSRRLERLQQLLNTQQLQRNKARVGRRESVLVEGVSKKRDGELSGRSGTLRTVNFAGPVALIGQFVDVEIVEGLPNSLRGRLV.

The MTTase N-terminal domain occupies 2–117 (KHLYIKTFGC…LPQMIQRALD (116 aa)). [4Fe-4S] cluster is bound by residues cysteine 11, cysteine 48, cysteine 80, cysteine 154, cysteine 158, and cysteine 161. The Radical SAM core domain occupies 140-372 (RAQGVVGQVT…QQLLNTQQLQ (233 aa)). Residues 375 to 437 (KARVGRRESV…LPNSLRGRLV (63 aa)) enclose the TRAM domain.

The protein belongs to the methylthiotransferase family. MiaB subfamily. Monomer. It depends on [4Fe-4S] cluster as a cofactor.

The protein localises to the cytoplasm. The catalysed reaction is N(6)-dimethylallyladenosine(37) in tRNA + (sulfur carrier)-SH + AH2 + 2 S-adenosyl-L-methionine = 2-methylsulfanyl-N(6)-dimethylallyladenosine(37) in tRNA + (sulfur carrier)-H + 5'-deoxyadenosine + L-methionine + A + S-adenosyl-L-homocysteine + 2 H(+). In terms of biological role, catalyzes the methylthiolation of N6-(dimethylallyl)adenosine (i(6)A), leading to the formation of 2-methylthio-N6-(dimethylallyl)adenosine (ms(2)i(6)A) at position 37 in tRNAs that read codons beginning with uridine. The chain is tRNA-2-methylthio-N(6)-dimethylallyladenosine synthase from Magnetococcus marinus (strain ATCC BAA-1437 / JCM 17883 / MC-1).